A 325-amino-acid polypeptide reads, in one-letter code: Tetraacyldisaccharide 4'-kinase (325 aa).

53–60 (SVGGNGKT) lines the ATP pocket.

Belongs to the LpxK family.

It carries out the reaction a lipid A disaccharide + ATP = a lipid IVA + ADP + H(+). It participates in glycolipid biosynthesis; lipid IV(A) biosynthesis; lipid IV(A) from (3R)-3-hydroxytetradecanoyl-[acyl-carrier-protein] and UDP-N-acetyl-alpha-D-glucosamine: step 6/6. Its function is as follows. Transfers the gamma-phosphate of ATP to the 4'-position of a tetraacyldisaccharide 1-phosphate intermediate (termed DS-1-P) to form tetraacyldisaccharide 1,4'-bis-phosphate (lipid IVA). This chain is Tetraacyldisaccharide 4'-kinase, found in Mannheimia succiniciproducens (strain KCTC 0769BP / MBEL55E).